The primary structure comprises 219 residues: NADH-ubiquinone oxidoreductase 23 kDa subunit, mitochondrial (219 aa).

4Fe-4S ferredoxin-type domains are found at residues 111-140 (RRYPSGEERCIACKLCEAVCPAQAITIEAE) and 150-179 (TRYDIDMTKCIYCGFCQESCPVDAIVESPN). Residues Cys-120, Cys-123, Cys-126, Cys-130, Cys-159, Cys-162, Cys-165, and Cys-169 each contribute to the [4Fe-4S] cluster site.

Belongs to the complex I 23 kDa subunit family. In terms of assembly, complex I is composed of about 40 different subunits. Requires [4Fe-4S] cluster as cofactor.

The protein localises to the mitochondrion. It carries out the reaction a ubiquinone + NADH + 5 H(+)(in) = a ubiquinol + NAD(+) + 4 H(+)(out). Functionally, core subunit of the mitochondrial membrane respiratory chain NADH dehydrogenase (Complex I) that is believed to belong to the minimal assembly required for catalysis. Complex I functions in the transfer of electrons from NADH to the respiratory chain. The immediate electron acceptor for the enzyme is believed to be ubiquinone. May donate electrons to ubiquinone. This chain is NADH-ubiquinone oxidoreductase 23 kDa subunit, mitochondrial (nuo21.3c), found in Neurospora crassa (strain ATCC 24698 / 74-OR23-1A / CBS 708.71 / DSM 1257 / FGSC 987).